A 355-amino-acid polypeptide reads, in one-letter code: NAD-dependent protein deacylase sirtuin-6 (355 aa).

Ser-2 is modified (N-acetylserine). Position 10 is a phosphoserine; by MAPK8 (Ser-10). A Deacetylase sirtuin-type domain is found at 27–272 (PEELERKVWE…TRLMKHLGLE (246 aa)). At Lys-33 the chain carries N6-acetyllysine. NAD(+) contacts are provided by Ala-53, Thr-57, Phe-64, Arg-65, Trp-71, Gln-113, and His-133. His-133 serves as the catalytic Proton acceptor. Residues Cys-141, Cys-144, and Cys-166 each coordinate Zn(2+). Lys-170 participates in a covalent cross-link: Glycyl lysine isopeptide (Lys-Gly) (interchain with G-Cter in ubiquitin). Position 177 (Cys-177) interacts with Zn(2+). NAD(+) contacts are provided by Gly-214, Ser-216, Asn-240, Gln-242, and Val-258. A disordered region spans residues 284–355 (RALPPLPRPP…KRVKAKAVPS (72 aa)). Residues 287–296 (PPLPRPPTPK) show a composition bias toward pro residues. Residue Thr-294 is modified to Phosphothreonine. A phosphoserine mark is found at Ser-303 and Ser-330. A compositionally biased stretch (basic residues) spans 343–355 (RPPKRVKAKAVPS).

This sequence belongs to the sirtuin family. Class IV subfamily. As to quaternary structure, homodimer; binds to nucleosomes and DNA ends as a homodimer. Interacts with RELA; interferes with RELA binding to target DNA. Interacts with SMARCA5; promoting recruitment of SMARCA5/SNF2H to double-strand breaks (DSBs) sites. Interacts with the mTORC2 complex; preventing the ability of SIRT6 to deacetylate FOXO1. Interacts with the CLOCK-BMAL1 complex; recruited by the CLOCK-BMAL1 complex to regulate expression of clock-controlled genes. Interacts with CSNK2A2; preventing CSNK2A2 localization to the nucleus. (Microbial infection) Interacts with Kaposi's sarcoma-associated herpesvirus protein VIRF-1; this interaction prevents SIRT6 deubiquitination by USP10. Zn(2+) is required as a cofactor. Acetylated at Lys-33. Deacetylation at Lys-33 by SIRT1 promotes homomultimerization and binding to double-strand breaks (DSBs) sites. Post-translationally, phosphorylation at Ser-10 by MAPK8/JNK1 in response to oxidative stress stimulates the mono-ADP-ribosyltransferase activity on PARP1, leading to PARP1 recruitment to double-strand breaks (DSBs). In terms of processing, monoubiquitinated at Lys-170 by STUB1/CHIP, preventing its degradation by the proteasome. Deubiquitinated by USP10, also preventing its degradation by the proteasome. Sumoylated, leading to specifically decrease ability to deacetylate histone H3 at 'Lys-56' (H3K56ac).

The protein localises to the nucleus. The protein resides in the chromosome. Its subcellular location is the telomere. It is found in the endoplasmic reticulum. The enzyme catalyses N(6)-acetyl-L-lysyl-[protein] + NAD(+) + H2O = 2''-O-acetyl-ADP-D-ribose + nicotinamide + L-lysyl-[protein]. The catalysed reaction is N(6)-tetradecanoyl-L-lysyl-[protein] + NAD(+) + H2O = 2''-O-tetradecanoyl-ADP-D-ribose + nicotinamide + L-lysyl-[protein]. It carries out the reaction N(6)-hexadecanoyl-L-lysyl-[protein] + NAD(+) + H2O = 2''-O-hexadecanoyl-ADP-D-ribose + nicotinamide + L-lysyl-[protein]. It catalyses the reaction L-lysyl-[protein] + NAD(+) = N(6)-(ADP-D-ribosyl)-L-lysyl-[protein] + nicotinamide + H(+). The enzyme catalyses L-arginyl-[protein] + NAD(+) = N(omega)-(ADP-D-ribosyl)-L-arginyl-[protein] + nicotinamide + H(+). With respect to regulation, compared to the defatty-acylase activity, the protein deacetylase activity is weak in vitro, and requires activation. The histone deacetylase activity is strongly activated upon binding to nucleosomes and chromatin in vivo. Two molecules of SIRT6 associate with the acidic patch of one nucleosome, while the C-terminal disordered region of SIRT6 associates with nucleosomal DNA, leading to efficient histone deacetylation. The protein-lysine deacetylase activity is also activated by long-chain free fatty-acids. The histone deacetylase activity is specifically repressed by long non-coding RNA lncPRESS1, which binds to SIRT6 and prevents chromatin-binding, thereby promoting stem cell pluripotency. Due to its essential role as tumor suppressor and involvement in DNA repair and life span, extensive research is made for the identification of small compound regulators of SIRT6. Nitro-fatty acids (nitro-oleic acid and nitro-conjugated linoleic acid) strongly stimulate the protein-lysine deacetylase activity by forming a covalent Michael adduct formation with Cys-18. Activated by UBCS039 (4-(pyridin-3-yl)-4,5- dihydropyrrolo[1,2-a]quinoxaline). Inhibited by non-selective hydroxamate trichostatin A inhibitor. Deacetylase activity is activated by fluvastatin and quercetin-based compounds. The protein-lysine deacetylase activity, but not the defatty-acylase activity, is specifically activated by MDL-800 and MDL-801 activators in vivo, enhancing the histone deacetylase and tumor suppressor activities. MDL-800 and MDL-801 selectively activate SIRT6 and not other members of the sirtuin family. The binding-mode of MDL-801 is however subject to discussion. NAD-dependent protein deacetylase, deacylase and mono-ADP-ribosyltransferase that plays an essential role in DNA damage repair, telomere maintenance, metabolic homeostasis, inflammation, tumorigenesis and aging. Displays protein-lysine deacetylase or defatty-acylase (demyristoylase and depalmitoylase) activity, depending on the context. Acts as a key histone deacetylase by catalyzing deacetylation of histone H3 at 'Lys-9', 'Lys-18' and 'Lys-56' (H3K9ac, H3K18ac and H3K56ac, respectively), suppressing target gene expression of several transcription factors, including NF-kappa-B. Acts as an inhibitor of transcription elongation by mediating deacetylation of H3K9ac and H3K56ac, preventing release of NELFE from chromatin and causing transcriptional pausing. Involved in DNA repair by promoting double-strand break (DSB) repair: acts as a DSB sensor by recognizing and binding DSB sites, leading to (1) recruitment of DNA repair proteins, such as SMARCA5/SNF2H, and (2) deacetylation of histone H3K9ac and H3K56ac. SIRT6 participation to DSB repair is probably involved in extension of life span. Also promotes DNA repair by deacetylating non-histone proteins, such as DDB2 and p53/TP53. Specifically deacetylates H3K18ac at pericentric heterochromatin, thereby maintaining pericentric heterochromatin silencing at centromeres and protecting against genomic instability and cellular senescence. Involved in telomere maintenance by catalyzing deacetylation of histone H3 in telomeric chromatin, regulating telomere position effect and telomere movement in response to DNA damage. Required for embryonic stem cell differentiation by mediating histone deacetylation of H3K9ac. Plays a major role in metabolism by regulating processes such as glycolysis, gluconeogenesis, insulin secretion and lipid metabolism. Inhibits glycolysis via histone deacetylase activity and by acting as a corepressor of the transcription factor HIF1A, thereby controlling the expression of multiple glycolytic genes. Has tumor suppressor activity by repressing glycolysis, thereby inhibiting the Warburg effect. Also regulates glycolysis and tumorigenesis by mediating deacetylation and nuclear export of non-histone proteins, such as isoform M2 of PKM (PKM2). Acts as a negative regulator of gluconeogenesis by mediating deacetylation of non-histone proteins, such as FOXO1 and KAT2A/GCN5. Promotes beta-oxidation of fatty acids during fasting by catalyzing deacetylation of NCOA2, inducing coactivation of PPARA. Acts as a regulator of lipid catabolism in brown adipocytes, both by catalyzing deacetylation of histones and non-histone proteins, such as FOXO1. Also acts as a regulator of circadian rhythms, both by regulating expression of clock-controlled genes involved in lipid and carbohydrate metabolism, and by catalyzing deacetylation of PER2. The defatty-acylase activity is specifically involved in regulation of protein secretion. Has high activity toward long-chain fatty acyl groups and mediates protein-lysine demyristoylation and depalmitoylation of target proteins, such as RRAS2 and TNF, thereby regulating their secretion. Also acts as a mono-ADP-ribosyltransferase by mediating mono-ADP-ribosylation of PARP1, TRIM28/KAP1 or SMARCC2/BAF170. Mono-ADP-ribosyltransferase activity is involved in DNA repair, cellular senescence, repression of LINE-1 retrotransposon elements and regulation of transcription. The chain is NAD-dependent protein deacylase sirtuin-6 from Homo sapiens (Human).